A 271-amino-acid chain; its full sequence is Putative phosphoenolpyruvate synthase regulatory protein (271 aa).

151 to 158 (GVSRSGKT) contacts ADP.

It belongs to the pyruvate, phosphate/water dikinase regulatory protein family. PSRP subfamily.

It carries out the reaction [pyruvate, water dikinase] + ADP = [pyruvate, water dikinase]-phosphate + AMP + H(+). The enzyme catalyses [pyruvate, water dikinase]-phosphate + phosphate + H(+) = [pyruvate, water dikinase] + diphosphate. Functionally, bifunctional serine/threonine kinase and phosphorylase involved in the regulation of the phosphoenolpyruvate synthase (PEPS) by catalyzing its phosphorylation/dephosphorylation. In Paraburkholderia phytofirmans (strain DSM 17436 / LMG 22146 / PsJN) (Burkholderia phytofirmans), this protein is Putative phosphoenolpyruvate synthase regulatory protein.